A 79-amino-acid polypeptide reads, in one-letter code: Small ribosomal subunit protein uS17 (79 aa).

Belongs to the universal ribosomal protein uS17 family. In terms of assembly, part of the 30S ribosomal subunit.

Its function is as follows. One of the primary rRNA binding proteins, it binds specifically to the 5'-end of 16S ribosomal RNA. The sequence is that of Small ribosomal subunit protein uS17 from Bartonella quintana (strain Toulouse) (Rochalimaea quintana).